The sequence spans 538 residues: [Pyruvate dehydrogenase [acetyl-transferring]]-phosphatase 1, mitochondrial (538 aa).

The transit peptide at methionine 1–tyrosine 71 directs the protein to the mitochondrion. The region spanning valine 109–phenylalanine 525 is the PPM-type phosphatase domain. 2 residues coordinate Mn(2+): aspartate 144 and glycine 145. Lysine 202 carries the N6-acetyllysine modification. Residues aspartate 418 and aspartate 516 each coordinate Mn(2+).

It belongs to the PP2C family. Heterodimer of a catalytic (PDP1) and a regulatory (PDPR) subunit. Requires Mn(2+) as cofactor. It depends on Mg(2+) as a cofactor.

The protein localises to the mitochondrion. It carries out the reaction O-phospho-L-seryl-[pyruvate dehydrogenase E1 alpha subunit] + H2O = L-seryl-[pyruvate dehydrogenase E1 alpha subunit] + phosphate. Its activity is regulated as follows. Magnesium-dependent and calcium-stimulated. PDP1 activity strongly depends on its Ca(2+)-dependent binding to the lipoyl domain of E2 subunit of component of the pyruvate dehydrogenase complex. Functionally, mitochondrial enzyme that catalyzes the dephosphorylation and concomitant reactivation of the alpha subunit of the E1 component of the pyruvate dehydrogenase complex (PDC), thereby stimulating the conversion of pyruvate into acetyl-CoA. The sequence is that of [Pyruvate dehydrogenase [acetyl-transferring]]-phosphatase 1, mitochondrial (PDP1) from Bos taurus (Bovine).